The sequence spans 422 residues: Light-independent protochlorophyllide reductase subunit N (422 aa).

[4Fe-4S] cluster-binding residues include Cys26, Cys51, and Cys112.

It belongs to the BchN/ChlN family. In terms of assembly, protochlorophyllide reductase is composed of three subunits; BchL, BchN and BchB. Forms a heterotetramer of two BchB and two BchN subunits. [4Fe-4S] cluster is required as a cofactor.

It carries out the reaction chlorophyllide a + oxidized 2[4Fe-4S]-[ferredoxin] + 2 ADP + 2 phosphate = protochlorophyllide a + reduced 2[4Fe-4S]-[ferredoxin] + 2 ATP + 2 H2O. It participates in porphyrin-containing compound metabolism; bacteriochlorophyll biosynthesis (light-independent). Component of the dark-operative protochlorophyllide reductase (DPOR) that uses Mg-ATP and reduced ferredoxin to reduce ring D of protochlorophyllide (Pchlide) to form chlorophyllide a (Chlide). This reaction is light-independent. The NB-protein (BchN-BchB) is the catalytic component of the complex. This is Light-independent protochlorophyllide reductase subunit N from Acidiphilium rubrum.